Here is a 180-residue protein sequence, read N- to C-terminus: UPF0149 protein XCV3523 (180 aa).

This sequence belongs to the UPF0149 family.

This Xanthomonas euvesicatoria pv. vesicatoria (strain 85-10) (Xanthomonas campestris pv. vesicatoria) protein is UPF0149 protein XCV3523.